A 1253-amino-acid polypeptide reads, in one-letter code: Structural polyprotein (1253 aa).

The tract at residues 37 to 71 (FQAQQMQQLISAVNALTMRQNAIAPARPPKPKKKK) is host transcription inhibition. A disordered region spans residues 58–109 (AIAPARPPKPKKKKTTKPKPKTQPKKINGKTQQQKKKDKQADKKKKKPGKRE). The short motif at 64–105 (PPKPKKKKTTKPKPKTQPKKINGKTQQQKKKDKQADKKKKKP) is the Nuclear localization signal element. The segment covering 65 to 107 (PKPKKKKTTKPKPKTQPKKINGKTQQQKKKDKQADKKKKKPGK) has biased composition (basic residues). The tract at residues 87 to 120 (KTQQQKKKDKQADKKKKKPGKRERMCMKIENDCI) is binding to the viral RNA. A ribosome-binding region spans residues 105-119 (PGKRERMCMKIENDC). C119 and C134 are disulfide-bonded. The Peptidase S3 domain occupies 119-267 (CIFEVKHEGK…RVTPEGSEEW (149 aa)). H145 acts as the Charge relay system in catalysis. The short motif at 150-160 (IDNADLAKLAF) is the Nuclear export signal element. An interaction with spike glycoprotein E2 region spans residues 161–166 (KKSSKY). D167 serves as the catalytic Charge relay system. The interval 189 to 199 (PEGHYNWHHGA) is dimerization of the capsid protein. S219 functions as the Charge relay system in the catalytic mechanism. A dimerization of the capsid protein region spans residues 225 to 229 (DNKGR). Residues 268–701 (SAPLITAMCV…YGLYPAATVS (434 aa)) are Extracellular-facing. 3 disulfides stabilise this stretch: C276-C285, C290-C294, and C293-C325. A glycan (N-linked (GlcNAc...) asparagine; by host) is linked at N280. An N-linked (GlcNAc...) asparagine; by host glycan is attached at N327. Intrachain disulfides connect C352–C458, C355–C361, C424–C438, C486–C598, C534–C558, and C536–C553. N533 carries an N-linked (GlcNAc...) asparagine; by host glycan. Residue N595 is glycosylated (N-linked (GlcNAc...) asparagine; by host). Residues 702-722 (AVVGMSLLALISIFASCYMLV) form a helical membrane-spanning segment. A lipid anchor (S-stearoyl cysteine; by host) is attached at C718. Residues 723–727 (AARSK) are interaction with the capsid protein. Residues 723–755 (AARSKCLTPYALTPGAAVPWTLGILCCAPRAHA) are Cytoplasmic-facing. C728 carries the S-stearoyl cysteine; by host lipid modification. Residues 728–748 (CLTPYALTPGAAVPWTLGILC) form a transient transmembrane before p62-6K protein processing region. A disulfide bridge links C728 with C749. 2 S-palmitoyl cysteine; by host lipidation sites follow: C748 and C749. Topologically, residues 756–770 (ASVAETMAYLWDQNQ) are extracellular. The helical transmembrane segment at 771–791 (ALFWLEFAAPVACILIITYCL) threads the bilayer. A topological domain (cytoplasmic) is located at residue R792. A helical transmembrane segment spans residues 793–813 (NVLCCCKSLSFLVLLSLGATA). Residues 814–1230 (RAYEHSTVMP…ALSWVQKISG (417 aa)) are Extracellular-facing. Cystine bridges form between C864-C929, C877-C909, C878-C911, and C883-C893. The interval 899 to 916 (VYPFMWGGAYCFCDSENT) is E1 fusion peptide loop. Residues N956 and N1085 are each glycosylated (N-linked (GlcNAc...) asparagine; by host). 4 disulfide bridges follow: C1074-C1086, C1116-C1191, C1121-C1195, and C1143-C1185. An E1-DIII; interaction with host receptor VLDLR region spans residues 1112–1192 (IDLTCTVATC…SLCSARATCS (81 aa)). Residues 1231-1251 (GLGAFAIGAILVLVVVTCIGL) form a helical membrane-spanning segment. C1248 carries S-stearoyl cysteine; by host lipidation. Over 1252–1253 (RR) the chain is Cytoplasmic.

Homodimer. Homomultimer. Interacts with host karyopherin KPNA4; this interaction allows the nuclear import of the viral capsid protein. Interacts with spike glycoprotein E2. Interacts with host IRAK1; the interaction leads to inhibition of IRAK1-dependent signaling. In terms of assembly, the precursor of protein E3/E2 and E1 form a heterodimer shortly after synthesis. As to quaternary structure, the precursor of protein E3/E2 and E1 form a heterodimer shortly after synthesis. Processing of the precursor of protein E3/E2 into E2 and E3 results in a heterodimer of the spike glycoproteins E2 and E1. Spike at virion surface are constituted of a trimer of E2-E1 heterodimers. E2-E1 heterodimers interact with host VLDLR or LRP8/APOER2 to mediate viral entry. After target cell attachment and endocytosis, E1 change conformation to form homotrimers. Interacts with 6K protein. Interacts (via E1-DIII) with host VLDLR (via class A repeats); this interaction mediates viral entry into host cell. Interacts with spike glycoprotein E1. Processing of the precursor of protein E3/E2 into E2 and E3 results in a heterodimer of the spike glycoproteins E2 and E1. Spike at virion surface are constituted of a trimer of E2-E1 heterodimers. E2-E1 heterodimers interact with host VLDLR or LRP8/APOER2 to mediate viral entry. Interacts with 6K protein. In terms of assembly, oligomer. Interacts with spike glycoprotein E1. Interacts with spike glycoprotein E2. In terms of processing, specific enzymatic cleavages in vivo yield mature proteins. Capsid protein is auto-cleaved during polyprotein translation, unmasking a signal peptide at the N-terminus of the precursor of E3/E2. The remaining polyprotein is then targeted to the host endoplasmic reticulum, where host signal peptidase cleaves it into pE2, 6K and E1 proteins. pE2 is further processed to mature E3 and E2 by host furin in trans-Golgi vesicle. Protein processing process takes about 30 minutes at physiologic temperatures. The folding of the p62/6K/E1 precursor requires the formation of intrachain disulfide bonds and has been shown to involve a transient covalent interaction between the nascent and newly synthesized heterodimer and the host-cell chaperones, P4HB/PDI and PDIA3/ERp57. The folding pathway also includes non covalent interaction with human CANX/calnexin and CALR/calreticulin. Post-translationally, palmitoylated via thioester bonds. These palmitoylations may induce disruption of the C-terminus transmembrane. This would result in the reorientation of E2 C-terminus from lumenal to cytoplasmic side. Envelope E1, E2 and E3 proteins are N-glycosylated. In terms of processing, stearoylated. Post-translationally, palmitoylated via thioester bonds with about four covalently bound fatty acids per molecule.

It is found in the virion. Its subcellular location is the host cytoplasm. The protein localises to the host cell membrane. It localises to the host nucleus. The protein resides in the virion membrane. It is found in the host Golgi apparatus. Its subcellular location is the host trans-Golgi network. The protein localises to the host endoplasmic reticulum. It catalyses the reaction Autocatalytic release of the core protein from the N-terminus of the togavirus structural polyprotein by hydrolysis of a -Trp-|-Ser- bond.. Its function is as follows. Forms an icosahedral capsid with a T=4 symmetry composed of 240 copies of the capsid protein surrounded by a lipid membrane through which penetrate 80 spikes composed of trimers of E1-E2 heterodimers. The capsid protein binds to the viral RNA genome at a site adjacent to a ribosome binding site for viral genome translation following genome release. Possesses a protease activity that results in its autocatalytic cleavage from the nascent structural protein. Following its self-cleavage, the capsid protein transiently associates with ribosomes, and within several minutes the protein binds to viral RNA and rapidly assembles into icosahedric core particles. The resulting nucleocapsid eventually associates with the cytoplasmic domain of the spike glycoprotein E2 at the cell membrane, leading to budding and formation of mature virions. In case of infection, new virions attach to target cells and after clathrin-mediated endocytosis their membrane fuses with the host endosomal membrane. This leads to the release of the nucleocapsid into the cytoplasm, followed by an uncoating event necessary for the genomic RNA to become accessible. The uncoating might be triggered by the interaction of capsid proteins with ribosomes. Binding of ribosomes would release the genomic RNA since the same region is genomic RNA-binding and ribosome-binding. Specifically inhibits interleukin-1 receptor-associated kinase 1/IRAK1-dependent signaling during viral entry, representing a means by which the alphaviruses may evade innate immune detection and activation prior to viral gene expression. Functionally, provides the signal sequence for the translocation of the precursor of protein E3/E2 to the host endoplasmic reticulum. Furin-cleaved E3 remains associated with spike glycoprotein E1 and mediates pH protection of the latter during the transport via the secretory pathway. After virion release from the host cell, the assembly protein E3 is gradually released in the extracellular space. In terms of biological role, plays a role in viral attachment to target host cell, by binding to the cell receptors VLDLR or LRP8/APOER2. The host LDLR can act as a cell receptor for viral entry. Synthesized as a p62 precursor which is processed by furin at the cell membrane just before virion budding, giving rise to E2-E1 heterodimer. The p62-E1 heterodimer is stable, whereas E2-E1 is unstable and dissociate at low pH. p62 is processed at the last step, presumably to avoid E1 fusion activation before its final export to cell surface. E2 C-terminus contains a transitory transmembrane that would be disrupted by palmitoylation, resulting in reorientation of the C-terminal tail from lumenal to cytoplasmic side. This step is critical since E2 C-terminus is involved in budding by interacting with capsid proteins. This release of E2 C-terminus in cytoplasm occurs lately in protein export, and precludes premature assembly of particles at the endoplasmic reticulum membrane. Acts as a viroporin that participates in virus glycoprotein processing and transport to the plasma membrane, cell permeabilization and budding of viral particles. Disrupts the calcium homeostasis of the cell, probably at the endoplasmic reticulum level. This leads to cytoplasmic calcium elevation. Because of its lipophilic properties, the 6K protein is postulated to influence the selection of lipids that interact with the transmembrane domains of the glycoproteins, which, in turn, affects the deformability of the bilayer required for the extreme curvature that occurs as budding proceeds. Present in low amount in virions, about 3% compared to viral glycoproteins. Its function is as follows. Class II viral fusion protein. Fusion activity is inactive as long as E1 is bound to E2 in mature virion. After virus attachment to target cell via host VLDLR or LRP8/APOER2 and endocytosis, acidification of the endosome induces dissociation of E1/E2 heterodimer and concomitant trimerization of the E1 subunits. This E1 trimer is fusion active, and promotes release of viral nucleocapsid in cytoplasm after endosome and viral membrane fusion. Efficient fusion requires the presence of cholesterol and sphingolipid in the target membrane. Fusion is optimal at levels of about 1 molecule of cholesterol per 2 molecules of phospholipids, and is specific for sterols containing a 3-beta-hydroxyl group. This Aedes (Middle-African hedgehog) protein is Structural polyprotein.